The following is a 540-amino-acid chain: uncharacterized protein (540 aa).

ABC transporter domains lie at 2–252 and 320–537; these read IAVN…KLSQ and LRVE…LTEL. ATP is bound at residue 34-41; the sequence is GANGAGKS.

Belongs to the ABC transporter superfamily.

This is an uncharacterized protein from Bacillus subtilis (strain 168).